The chain runs to 300 residues: CDAN1-interacting nuclease 1 (300 aa).

The protein localises to the nucleus. Its subcellular location is the cytoplasm. Its function is as follows. May play a role in erythroid cell differentiation. The sequence is that of CDAN1-interacting nuclease 1 (cdin1) from Danio rerio (Zebrafish).